The chain runs to 1205 residues: MIKLQFQRNIVPTHDNPLTTSEILKRLRDLLGELTSLSQDTIDRDSVLPVARSLVNNNLLHHKDKGIRSYTLCCIVELLRLCAPDAPFTLSQLEDIFQVILKILSGLMNQESTYYPQIYEILESLSNVKSAVLIVDLPNAEEFLVNIFRLFFDLARKGTTKNVEFYMLDIINQLINEINTIPAAALNILFAQLISGKGVRQTIGSSDSTNHGPAFQLARNIFHDSADRLQRYVCQYFSDIIFDSRDSLSDSMTTPEFIFSHNLVLQLWKYAPTTLLNIIPQFENELQAEQTSVRLVAIETVGLMLQDNAIWSDYPRVWSAFCGRLNDKSVACRIKCIEVASNALQNSLATSEIIENVVQMLQSKLADTDEKVRVATLKTIEQLTFETFKMQFSVQALKLMGDRLRDRKLNVRLQAIRTLSQIYNRAYQDLIDGVEYSIQMFSWIPSSLLEVFYVNDETTNAAVEICMAELVLQYLSSDTQTRLNRLFLSIKYFSEKAMRVFILLLQRQVKYSELLNYYIECCKNYNGGVMDNDEESITNKLKKVIDIISSKSSNPTLTEATFRKFAELNDRQSYKMLLQTFSIKSEYQVVLKSIKYLFKRVSETLSTASLECFRIFVYRSALFAFNKSNVHEIIQLLNEPVKYHNFLKPSEALLQHLPLIHPNIYGEVVIEVENIIVSSGIESDPKVIKALSQFSKRKKNFSIQTTTAEILRKLCLHGTQEQAKQAATIIAITETKEFKLDMITNIVENLEYNGGLPVRLMTLGQLFLYTLEEVEKVADQVTEFLVKKVIQRFPEKYDDTHNDEEWCTYEKLDNLTMCKVLAIRVLVNRLRAAAGGTEALNIGAPIIKLLKVLLMADGELSPFKNTPKISRAYLRLTASKYFLKLCSIPFYAEHIDFSSYVQISLLCQDENFDVRNLFLTKLQKQLQLKKLPISYYPLLFLTAVDPEEEIKTKASIWIRSQVAFFQKTHDFTMEYVATYLIHLLSHHPDISSIESENSLDFIAYIRFYVDTVVNSENVPIVFHLMQRIKQSYDVIEDGNNYIYVLSDMAQKILQVKSQNFGWSLTTYPKQIKLPYEILRPIPSIDEKKRIFNKIFITPKMESQIEHAIRTPVSSFAKQTTNKHANLKQKKTHSSKSDKKSSRRRKNEKRRKLNEQNPNIRNVPERSSSRFQGIRINYSEAPSSSEEISEEEEEISEEDFDEIEDL.

Residues 1111–1123 are compositionally biased toward polar residues; it reads PVSSFAKQTTNKH. The tract at residues 1111–1205 is disordered; it reads PVSSFAKQTT…EEDFDEIEDL (95 aa). Composition is skewed to basic residues over residues 1124 to 1133 and 1140 to 1151; these read ANLKQKKTHS and SSRRRKNEKRRK. Acidic residues predominate over residues 1186 to 1205; it reads EISEEEEEISEEDFDEIEDL.

As to quaternary structure, interacts with eso1 and hrk1. Associates with sor1.

The protein localises to the nucleus. The protein resides in the chromosome. It is found in the centromere. Functionally, required for the establishment and maintenance of sister chromatid cohesion during S phase. Prevents their formation until eso1 is present. May also have a role during meiosis. The protein is Sister chromatid cohesion protein pds5 (pds5) of Schizosaccharomyces pombe (strain 972 / ATCC 24843) (Fission yeast).